Consider the following 61-residue polypeptide: Sperm protamine P1 (61 aa).

Residues M1 to Y61 are disordered.

Belongs to the protamine P1 family. As to expression, testis.

The protein localises to the nucleus. The protein resides in the chromosome. Protamines substitute for histones in the chromatin of sperm during the haploid phase of spermatogenesis. They compact sperm DNA into a highly condensed, stable and inactive complex. The chain is Sperm protamine P1 (PRM1) from Setonix brachyurus (Quokka).